Reading from the N-terminus, the 371-residue chain is Dual-specificity RNA methyltransferase RlmN (371 aa).

Glutamate 97 serves as the catalytic Proton acceptor. The Radical SAM core domain maps to 103–341; that stretch reads DGDRATLCVS…VTVRTTRGDD (239 aa). The cysteines at positions 110 and 346 are disulfide-linked. Residues cysteine 117, cysteine 121, and cysteine 124 each contribute to the [4Fe-4S] cluster site. S-adenosyl-L-methionine-binding positions include 171 to 172, serine 203, 225 to 227, and asparagine 303; these read GE and SLH. Catalysis depends on cysteine 346, which acts as the S-methylcysteine intermediate.

The protein belongs to the radical SAM superfamily. RlmN family. [4Fe-4S] cluster is required as a cofactor.

The protein localises to the cytoplasm. It carries out the reaction adenosine(2503) in 23S rRNA + 2 reduced [2Fe-2S]-[ferredoxin] + 2 S-adenosyl-L-methionine = 2-methyladenosine(2503) in 23S rRNA + 5'-deoxyadenosine + L-methionine + 2 oxidized [2Fe-2S]-[ferredoxin] + S-adenosyl-L-homocysteine. It catalyses the reaction adenosine(37) in tRNA + 2 reduced [2Fe-2S]-[ferredoxin] + 2 S-adenosyl-L-methionine = 2-methyladenosine(37) in tRNA + 5'-deoxyadenosine + L-methionine + 2 oxidized [2Fe-2S]-[ferredoxin] + S-adenosyl-L-homocysteine. Its function is as follows. Specifically methylates position 2 of adenine 2503 in 23S rRNA and position 2 of adenine 37 in tRNAs. m2A2503 modification seems to play a crucial role in the proofreading step occurring at the peptidyl transferase center and thus would serve to optimize ribosomal fidelity. The polypeptide is Dual-specificity RNA methyltransferase RlmN (Marinomonas sp. (strain MWYL1)).